We begin with the raw amino-acid sequence, 554 residues long: Oxygen-dependent choline dehydrogenase (554 aa).

4–33 contributes to the FAD binding site; that stretch reads DYIIIGAGSAGNVLATRLTEDPNTTVLLLE. The Proton acceptor role is filled by His-473.

It belongs to the GMC oxidoreductase family. Requires FAD as cofactor.

The enzyme catalyses choline + A = betaine aldehyde + AH2. It catalyses the reaction betaine aldehyde + NAD(+) + H2O = glycine betaine + NADH + 2 H(+). It participates in amine and polyamine biosynthesis; betaine biosynthesis via choline pathway; betaine aldehyde from choline (cytochrome c reductase route): step 1/1. Involved in the biosynthesis of the osmoprotectant glycine betaine. Catalyzes the oxidation of choline to betaine aldehyde and betaine aldehyde to glycine betaine at the same rate. The sequence is that of Oxygen-dependent choline dehydrogenase from Klebsiella pneumoniae subsp. pneumoniae (strain ATCC 700721 / MGH 78578).